The sequence spans 448 residues: Tryptophan dimethylallyltransferase 1 (448 aa).

Residues I80–L81 and E89 each bind L-tryptophan. R100, K186, and Y188 together coordinate substrate. L-tryptophan-binding residues include Y190 and R249. The substrate site is built by R262, K264, Y266, Q348, Y350, Y414, and Y418.

This sequence belongs to the tryptophan dimethylallyltransferase family. In terms of assembly, homodimer.

The enzyme catalyses L-tryptophan + dimethylallyl diphosphate = 4-(3-methylbut-2-enyl)-L-tryptophan + diphosphate. Its pathway is alkaloid biosynthesis; ergot alkaloid biosynthesis. In terms of biological role, tryptophan dimethylallyltransferase; part of the gene cluster that mediates the biosynthesis of fungal ergot alkaloid. DmaW catalyzes the first step of ergot alkaloid biosynthesis by condensing dimethylallyl diphosphate (DMAP) and tryptophan to form 4-dimethylallyl-L-tryptophan. The second step is catalyzed by the methyltransferase easF that methylates 4-dimethylallyl-L-tryptophan in the presence of S-adenosyl-L-methionine, resulting in the formation of 4-dimethylallyl-L-abrine. The catalase easC and the FAD-dependent oxidoreductase easE then transform 4-dimethylallyl-L-abrine to chanoclavine-I which is further oxidized by easD in the presence of NAD(+), resulting in the formation of chanoclavine-I aldehyde. Agroclavine dehydrogenase easG then mediates the conversion of chanoclavine-I aldehyde to agroclavine via a non-enzymatic adduct reaction: the substrate is an iminium intermediate that is formed spontaneously from chanoclavine-I aldehyde in the presence of glutathione. The presence of easA is not required to complete this reaction. Further conversion of agroclavine to paspalic acid is a two-step process involving oxidation of agroclavine to elymoclavine and of elymoclavine to paspalic acid, the second step being performed by the elymoclavine oxidase cloA. Paspalic acid is then further converted to D-lysergic acid. Ergopeptines are assembled from D-lysergic acid and three different amino acids by the D-lysergyl-peptide-synthetases composed each of a monomudular and a trimodular nonribosomal peptide synthetase subunit. LpsB and lpsC encode the monomodular subunits responsible for D-lysergic acid activation and incorporation into the ergopeptine backbone. LpsA1 and A2 subunits encode the trimodular nonribosomal peptide synthetase assembling the tripeptide portion of ergopeptines. LpsA1 is responsible for formation of the major ergopeptine, ergotamine, and lpsA2 for alpha-ergocryptine, the minor ergopeptine of the total alkaloid mixture elaborated by C.purpurea. D-lysergyl-tripeptides are assembled by the nonribosomal peptide synthetases and released as N-(D-lysergyl-aminoacyl)-lactams. Cyclolization of the D-lysergyl-tripeptides is performed by the Fe(2+)/2-ketoglutarate-dependent dioxygenase easH which introduces a hydroxyl group into N-(D-lysergyl-aminoacyl)-lactam at alpha-C of the aminoacyl residue followed by spontaneous condensation with the terminal lactam carbonyl group. This Claviceps purpurea (strain 20.1) (Ergot fungus) protein is Tryptophan dimethylallyltransferase 1.